The following is a 623-amino-acid chain: Putative chaperone protein ClpB2, chloroplastic (623 aa).

A Clp R domain is found at 1 to 123 (MNDLKFDPNV…KSEVEKLRGE (123 aa)). Repeat regions lie at residues 6 to 71 (FDPN…NQSL) and 77 to 123 (RNLG…LRGE). The tract at residues 129-375 (LKTYGTDLVE…HVKAQLDIQP (247 aa)) is i. 172–179 (GEPGVGKT) contacts ATP. The stretch at 368–462 (KAQLDIQPEE…LQEAERQHDV (95 aa)) forms a coiled coil. An ATP-binding site is contributed by 571–578 (GPTGVGKT).

Belongs to the ClpA/ClpB family.

This is Putative chaperone protein ClpB2, chloroplastic (CLPB2) from Arabidopsis thaliana (Mouse-ear cress).